Reading from the N-terminus, the 582-residue chain is Transcription factor PCF5 (582 aa).

2 disordered regions span residues 30–78 (AAGK…QHDH) and 123–195 (SPMG…GGGG). Gly residues predominate over residues 51 to 64 (GGDGGGVGGGGSGG). Residues 213–271 (RKDRHSKVCTARGPRDRRVRLSAHTAIQFYDVQDRLGYDRPSKAVDWLIKNAKDAIDKL) form the TCP domain. Disordered regions lie at residues 283–306 (GAGAGNAAAPPSSSTHPDSAENSD), 402–423 (MFHHQQHRHGGGGGGGNGTTQQ), and 548–582 (RLPARIQGDEEHNGGGGGNGDKPPPPSSVSSASHH).

Forms homodimers and heterodimers with PCF2.

It localises to the nucleus. In terms of biological role, transcription activator. Binds the promoter core sequence 5'-GGNCC-3'. The protein is Transcription factor PCF5 (PCF5) of Oryza sativa subsp. indica (Rice).